Reading from the N-terminus, the 406-residue chain is Cysteine desulfurase (406 aa).

K226 is modified (N6-(pyridoxal phosphate)lysine). C364 serves as the catalytic Cysteine persulfide intermediate.

It belongs to the class-V pyridoxal-phosphate-dependent aminotransferase family. Csd subfamily. Homodimer. Interacts with SufE and the SufBCD complex composed of SufB, SufC and SufD. The interaction with SufE is required to mediate the direct transfer of the sulfur atom from the S-sulfanylcysteine. Pyridoxal 5'-phosphate serves as cofactor.

It localises to the cytoplasm. The catalysed reaction is (sulfur carrier)-H + L-cysteine = (sulfur carrier)-SH + L-alanine. It catalyses the reaction L-selenocysteine + AH2 = hydrogenselenide + L-alanine + A + H(+). It participates in cofactor biosynthesis; iron-sulfur cluster biosynthesis. In terms of biological role, cysteine desulfurases mobilize the sulfur from L-cysteine to yield L-alanine, an essential step in sulfur metabolism for biosynthesis of a variety of sulfur-containing biomolecules. Component of the suf operon, which is activated and required under specific conditions such as oxidative stress and iron limitation. Acts as a potent selenocysteine lyase in vitro, that mobilizes selenium from L-selenocysteine. Selenocysteine lyase activity is however unsure in vivo. The sequence is that of Cysteine desulfurase from Escherichia coli O17:K52:H18 (strain UMN026 / ExPEC).